We begin with the raw amino-acid sequence, 478 residues long: Protein nucleotidyltransferase YdiU (478 aa).

ATP-binding residues include G84, G86, R87, K107, D119, G120, R170, and R177. Catalysis depends on D246, which acts as the Proton acceptor. Mg(2+) is bound by residues N247 and D256. D256 provides a ligand contact to ATP.

Belongs to the SELO family. Requires Mg(2+) as cofactor. It depends on Mn(2+) as a cofactor.

The enzyme catalyses L-seryl-[protein] + ATP = 3-O-(5'-adenylyl)-L-seryl-[protein] + diphosphate. It carries out the reaction L-threonyl-[protein] + ATP = 3-O-(5'-adenylyl)-L-threonyl-[protein] + diphosphate. The catalysed reaction is L-tyrosyl-[protein] + ATP = O-(5'-adenylyl)-L-tyrosyl-[protein] + diphosphate. It catalyses the reaction L-histidyl-[protein] + UTP = N(tele)-(5'-uridylyl)-L-histidyl-[protein] + diphosphate. The enzyme catalyses L-seryl-[protein] + UTP = O-(5'-uridylyl)-L-seryl-[protein] + diphosphate. It carries out the reaction L-tyrosyl-[protein] + UTP = O-(5'-uridylyl)-L-tyrosyl-[protein] + diphosphate. Its function is as follows. Nucleotidyltransferase involved in the post-translational modification of proteins. It can catalyze the addition of adenosine monophosphate (AMP) or uridine monophosphate (UMP) to a protein, resulting in modifications known as AMPylation and UMPylation. The polypeptide is Protein nucleotidyltransferase YdiU (Shigella sonnei (strain Ss046)).